Here is a 165-residue protein sequence, read N- to C-terminus: MNSLENLILIGIIKSCHGIQGHVILRSFTEPATKILERNLVNESGADIRIKLISQNAKGELICTFNDITTRNEAENLKGYKIFCLRTSLPELEEDEFYIADLNHLRILDQYNKEIGKIKNILNFGAGDIIEIEFLDKTTKLLPFNKEFFPTITKDYVILNYQTKV.

A PRC barrel domain is found at 94–165 (EDEFYIADLN…YVILNYQTKV (72 aa)).

The protein belongs to the RimM family. As to quaternary structure, binds ribosomal protein uS19.

The protein resides in the cytoplasm. In terms of biological role, an accessory protein needed during the final step in the assembly of 30S ribosomal subunit, possibly for assembly of the head region. Essential for efficient processing of 16S rRNA. May be needed both before and after RbfA during the maturation of 16S rRNA. It has affinity for free ribosomal 30S subunits but not for 70S ribosomes. The protein is Ribosome maturation factor RimM of Rickettsia typhi (strain ATCC VR-144 / Wilmington).